The following is a 199-amino-acid chain: MLVPIVVEQTGRGERSYDIYSRLLKDRIIFLGGAIDDTVSNLVIAQLLFLEAEDPDKDIHLYINSPGGVVTAGMAIYDTMRYIKAPVSTICVGQAASMGAFLLSGGEKGKRFSLANSRIMIHQPLGGFQGQATDIHIHAQEILRMKKKLNELLAEHSGQTVEKIEADTERDYFMSGEDAKTYGIIDSIITRNTITGGSR.

Ser-97 (nucleophile) is an active-site residue. The active site involves His-122.

Belongs to the peptidase S14 family. As to quaternary structure, fourteen ClpP subunits assemble into 2 heptameric rings which stack back to back to give a disk-like structure with a central cavity, resembling the structure of eukaryotic proteasomes.

It localises to the cytoplasm. It carries out the reaction Hydrolysis of proteins to small peptides in the presence of ATP and magnesium. alpha-casein is the usual test substrate. In the absence of ATP, only oligopeptides shorter than five residues are hydrolyzed (such as succinyl-Leu-Tyr-|-NHMec, and Leu-Tyr-Leu-|-Tyr-Trp, in which cleavage of the -Tyr-|-Leu- and -Tyr-|-Trp bonds also occurs).. In terms of biological role, cleaves peptides in various proteins in a process that requires ATP hydrolysis. Has a chymotrypsin-like activity. Plays a major role in the degradation of misfolded proteins. This Geotalea daltonii (strain DSM 22248 / JCM 15807 / FRC-32) (Geobacter daltonii) protein is ATP-dependent Clp protease proteolytic subunit.